The following is a 397-amino-acid chain: Multidrug resistance protein MdtH (397 aa).

11 helical membrane-spanning segments follow: residues 11-31 (WFLA…MPMI), 32-52 (SLRF…ALGL), 71-91 (FGAR…FASL), 94-114 (AQSG…GCLF), 137-157 (LLMM…SWLL), 163-183 (YVCL…LLIL), 211-231 (LVLI…IFPI), 242-262 (AVGW…YPLA), 291-311 (FANT…GIVI), 340-360 (LALG…YAML), and 366-386 (LPWL…VNCF).

Belongs to the major facilitator superfamily. DHA1 family. MdtH (TC 2.A.1.2.21) subfamily.

It is found in the cell inner membrane. The sequence is that of Multidrug resistance protein MdtH from Aeromonas hydrophila subsp. hydrophila (strain ATCC 7966 / DSM 30187 / BCRC 13018 / CCUG 14551 / JCM 1027 / KCTC 2358 / NCIMB 9240 / NCTC 8049).